The following is a 451-amino-acid chain: MSIQSNEILETIRMVADQNFDVRTITVGIDLHDCISCDIDELNRNIYRKITTVGKDLVETANILSAKYGVPIVNQRISVTPIAQIAAATKADSYVSVAQTLDRAAKAIGVSFIGGFSALVQKGMSPSDEVLIRSIPEAMKTTDIVCSSINIGSTRAGINMDAVKLAGETIKRTADITPEGFGCAKIVVFCNAVEDNPFMAGAFHGAGEADAVINVGVSGPGVVKEALANSHADTLTEVAEVVKKTAFKITRVGELIGQEAAKMLNIPFGILDLSLAPTPAIGDSVARILETMGLTVCGTHGTTAALALLNDAVKKGGMMASGSVGGLSGAFIPVSEDEGMIAAAESGILTLDKLEAMTAVCSVGLDMIAVPGKTPAHTLSGIIADEAAIGMINGKTTAVRIIPVTGKDVGESVEFGGLLGYAPIMPVKEGSCEIFVNRGGRIPAPVQSMKN.

It belongs to the UPF0210 family. As to quaternary structure, homodimer.

The sequence is that of UPF0210 protein Asuc_1169 from Actinobacillus succinogenes (strain ATCC 55618 / DSM 22257 / CCUG 43843 / 130Z).